A 93-amino-acid chain; its full sequence is Pancreatic polypeptide prohormone (93 aa).

The signal sequence occupies residues 1–29 (MPAACRCLFLLLLSACVALLLQPPLGTRG). At Y65 the chain carries Tyrosine amide. A propeptide spanning residues 89-93 (ELMDE) is cleaved from the precursor.

This sequence belongs to the NPY family.

It is found in the secreted. Functionally, hormone secreted by pancreatic cells that acts as a regulator of pancreatic and gastrointestinal functions probably by signaling through the G protein-coupled receptor NPY4R2. This chain is Pancreatic polypeptide prohormone (PPY), found in Canis lupus familiaris (Dog).